We begin with the raw amino-acid sequence, 118 residues long: ATP synthase subunit g, mitochondrial (118 aa).

In terms of assembly, F-type ATP synthases have 2 components, the catalytic core F(1) and the membrane-embedded component F(0), linked together by a central stalk and a peripheral stalk. The central stalk, also called rotor shaft, is often seen as part of F(1). The peripheral stalk is seen as part of F(0). F(0) contains the membrane channel next to the rotor. F-type ATP synthases form dimers but each monomer functions independently in ATP generation. The dimer consists of 18 different polypeptides: ATP1 (subunit alpha, part of F(1), 3 molecules per monomer), ATP2 (subunit beta, part of F(1), 3 molecules per monomer), ATP3 (subunit gamma, part of the central stalk), ATP4 (subunit b, part of the peripheral stalk), ATP5/OSCP (subunit 5/OSCP, part of the peripheral stalk), ATP6 (subunit a, part of the peripheral stalk), ATP7 (subunit d, part of the peripheral stalk), ATP8 (subunit 8, part of the peripheral stalk), OLI1 (subunit c, part of the rotor, 10 molecules per monomer), ATP14 (subunit h, part of the peripheral stalk), ATP15 (subunit epsilon, part of the central stalk), ATP16 (subunit delta, part of the central stalk), ATP17 (subunit f, part of the peripheral stalk), ATP18 (subunit i/j, part of the peripheral stalk). Dimer-specific subunits are ATP19 (subunit k, at interface between monomers), ATP20 (subunit g, at interface between monomers), TIM11 (subunit e, at interface between monomers). Also contains subunit L.

The protein resides in the mitochondrion inner membrane. In terms of biological role, mitochondrial membrane ATP synthase (F(1)F(0) ATP synthase or Complex V) produces ATP from ADP in the presence of a proton gradient across the membrane which is generated by electron transport complexes of the respiratory chain. F-type ATP synthases consist of two structural domains, F(1) - containing the extramembraneous catalytic core, and F(0) - containing the membrane proton channel, linked together by a central stalk and a peripheral stalk. During catalysis, ATP synthesis in the catalytic domain of F(1) is coupled via a rotary mechanism of the central stalk subunits to proton translocation. Part of the complex F(0) domain Minor subunit located with subunit a/ATP6 in the membrane. Together with subunit e/TIM11, probably contributes to membrane curvature at the site of the ATP synthase dimer, ultimately contributing to formation of cristae. The chain is ATP synthase subunit g, mitochondrial from Pichia angusta (Yeast).